The sequence spans 236 residues: 1-(5-phosphoribosyl)-5-[(5-phosphoribosylamino)methylideneamino] imidazole-4-carboxamide isomerase (236 aa).

Residue Asp-8 is the Proton acceptor of the active site. The Proton donor role is filled by Asp-127.

Belongs to the HisA/HisF family.

It is found in the cytoplasm. It catalyses the reaction 1-(5-phospho-beta-D-ribosyl)-5-[(5-phospho-beta-D-ribosylamino)methylideneamino]imidazole-4-carboxamide = 5-[(5-phospho-1-deoxy-D-ribulos-1-ylimino)methylamino]-1-(5-phospho-beta-D-ribosyl)imidazole-4-carboxamide. It participates in amino-acid biosynthesis; L-histidine biosynthesis; L-histidine from 5-phospho-alpha-D-ribose 1-diphosphate: step 4/9. In Sulfurimonas denitrificans (strain ATCC 33889 / DSM 1251) (Thiomicrospira denitrificans (strain ATCC 33889 / DSM 1251)), this protein is 1-(5-phosphoribosyl)-5-[(5-phosphoribosylamino)methylideneamino] imidazole-4-carboxamide isomerase.